A 458-amino-acid polypeptide reads, in one-letter code: Argininosuccinate lyase (458 aa).

The protein belongs to the lyase 1 family. Argininosuccinate lyase subfamily.

The protein localises to the cytoplasm. It catalyses the reaction 2-(N(omega)-L-arginino)succinate = fumarate + L-arginine. It functions in the pathway amino-acid biosynthesis; L-arginine biosynthesis; L-arginine from L-ornithine and carbamoyl phosphate: step 3/3. The protein is Argininosuccinate lyase of Buchnera aphidicola subsp. Baizongia pistaciae (strain Bp).